The following is a 180-amino-acid chain: NAD(P)H-quinone oxidoreductase subunit I, chloroplastic (180 aa).

2 consecutive 4Fe-4S ferredoxin-type domains span residues 55 to 84 (GRIHFEFDKCIACEVCVRVCPIDLPVVDWR) and 95 to 124 (LNYSIDFGVCIFCGNCVEYCPTSCLSMTEE). The [4Fe-4S] cluster site is built by Cys64, Cys67, Cys70, Cys74, Cys104, Cys107, Cys110, and Cys114.

The protein belongs to the complex I 23 kDa subunit family. NDH is composed of at least 16 different subunits, 5 of which are encoded in the nucleus. Requires [4Fe-4S] cluster as cofactor.

Its subcellular location is the plastid. It is found in the chloroplast thylakoid membrane. It catalyses the reaction a plastoquinone + NADH + (n+1) H(+)(in) = a plastoquinol + NAD(+) + n H(+)(out). It carries out the reaction a plastoquinone + NADPH + (n+1) H(+)(in) = a plastoquinol + NADP(+) + n H(+)(out). Its function is as follows. NDH shuttles electrons from NAD(P)H:plastoquinone, via FMN and iron-sulfur (Fe-S) centers, to quinones in the photosynthetic chain and possibly in a chloroplast respiratory chain. The immediate electron acceptor for the enzyme in this species is believed to be plastoquinone. Couples the redox reaction to proton translocation, and thus conserves the redox energy in a proton gradient. The chain is NAD(P)H-quinone oxidoreductase subunit I, chloroplastic from Hordeum vulgare (Barley).